A 141-amino-acid chain; its full sequence is Large ribosomal subunit protein uL11 (141 aa).

It belongs to the universal ribosomal protein uL11 family. In terms of assembly, part of the ribosomal stalk of the 50S ribosomal subunit. Interacts with L10 and the large rRNA to form the base of the stalk. L10 forms an elongated spine to which L12 dimers bind in a sequential fashion forming a multimeric L10(L12)X complex. One or more lysine residues are methylated.

Functionally, forms part of the ribosomal stalk which helps the ribosome interact with GTP-bound translation factors. In Ruegeria pomeroyi (strain ATCC 700808 / DSM 15171 / DSS-3) (Silicibacter pomeroyi), this protein is Large ribosomal subunit protein uL11.